We begin with the raw amino-acid sequence, 321 residues long: Peroxidase 42 (321 aa).

Residues 1-29 (MATSSGSCLIISLLVVVVAAALSASTASA) form the signal peptide. A Pyrrolidone carboxylic acid modification is found at Gln30. 4 cysteine pairs are disulfide-bonded: Cys40/Cys118, Cys73/Cys78, Cys124/Cys315, and Cys202/Cys227. The Proton acceptor role is filled by His71. Residues Asp72, Ile75, Gly77, Asp79, and Ser81 each coordinate Ca(2+). N-linked (GlcNAc...) asparagine glycans are attached at residues Asn85 and Asn96. Substrate is bound at residue Pro165. Residue His195 coordinates heme b. Thr196 contacts Ca(2+). N-linked (GlcNAc...) asparagine glycosylation is present at Asn211. Residues Asp239, Thr242, and Gly247 each coordinate Ca(2+). N-linked (GlcNAc...) asparagine glycosylation occurs at Asn270.

Belongs to the peroxidase family. Classical plant (class III) peroxidase subfamily. Heme b is required as a cofactor. Ca(2+) serves as cofactor.

Its subcellular location is the secreted. The catalysed reaction is 2 a phenolic donor + H2O2 = 2 a phenolic radical donor + 2 H2O. Functionally, removal of H(2)O(2), oxidation of toxic reductants, biosynthesis and degradation of lignin, suberization, auxin catabolism, response to environmental stresses such as wounding, pathogen attack and oxidative stress. These functions might be dependent on each isozyme/isoform in each plant tissue. This chain is Peroxidase 42 (PER42), found in Zea mays (Maize).